The following is a 1172-amino-acid chain: WD repeat-containing protein 48 homolog (1172 aa).

The tract at residues 1–115 (MYEYYSTGKI…HSYGGGGGGT (115 aa)) is disordered. The segment covering 13–36 (LPQQVDSNGINSKPMNSSPSTPIP) has biased composition (polar residues). Over residues 37–63 (NNNNNNNNNNNNNNNNNNNNNNNNNNN) the composition is skewed to low complexity. Over residues 64-89 (RNKSQQSFYLNNNNRNCGFSSPTKPQ) the composition is skewed to polar residues. Positions 90–107 (YNNNNNNNNNNNSNYNHS) are enriched in low complexity. WD repeat units lie at residues 152 to 202 (RHCF…GFKF), 208 to 246 (DHTDWVNDLFFNDSNILVSCSSDSTIKIWNTDSERCVNS), 249 to 548 (FHDD…SPMF), 560 to 599 (GEGISIYSLAIAQDASFVVSGSTERAIRGWDVRSGQKIFK), 602 to 641 (GHTDNIRSILLNDNSTRCLSASSDGTVRLWDIGEQRCIQV), 645 to 683 (LHTDSVWTLATNDSFSHFFSGGRDGMIFLTDLKTHQSRL), and 686 to 727 (RENE…NQSI). Residues 341–365 (ISTNNNNNNSSSSNNNNNNNNNNNN) are compositionally biased toward low complexity. Positions 341-544 (ISTNNNNNNS…NDNNNLNKKF (204 aa)) are disordered. Polar residues-rich tracts occupy residues 366-377 (GQTNTHENTAET), 388-408 (QLSSVNKNGIRSNLSNNNFRN), and 417-434 (PPSSVLNHTPKILSSNGR). Over residues 435-485 (NVNNRENNNNNNNNNNNNNNNNNNNNNNNNNNNNNNNNNINNNNHENNGNV) the composition is skewed to low complexity. Positions 486-503 (DVDDEDDDDDDDDDDDDD) are enriched in acidic residues. Over residues 504 to 513 (CNKNKKKYDD) the composition is skewed to basic and acidic residues. The span at 514 to 543 (NNNNNNYNNNNNKKNNSNDNNNDNNNLNKK) shows a compositional bias: low complexity. Residues 745–769 (NNNNNNNNNNNNNNNNNNNNNNNNN) are compositionally biased toward low complexity. Residues 745–775 (NNNNNNNNNNNNNNNNNNNNNNNNNNREKLS) are disordered. One copy of the WD 8 repeat lies at 794-833 (QGRAGIIKNQVLNNRRQVLTKDNDNNVQLWDITKGKEIES). Positions 926 to 986 (ELNHSNDSVN…TNSTTPNSGR (61 aa)) are disordered. The span at 930–984 (SNDSVNSSLSSNTSGDNNNNNYNNYNNYNNNNNNGLQKSSSSSSIVSTNSTTPNS) shows a compositional bias: low complexity.

It belongs to the WD repeat WDR48 family.

In Dictyostelium discoideum (Social amoeba), this protein is WD repeat-containing protein 48 homolog.